Reading from the N-terminus, the 131-residue chain is Protein yippee-like PJ691.02 (131 aa).

Positions 12–109 (RCYVCAKCKT…LEMQDAVLQR (98 aa)) constitute a Yippee domain. Residues C16, C19, C72, and C75 each coordinate Zn(2+).

This sequence belongs to the yippee family.

This Schizosaccharomyces pombe (strain 972 / ATCC 24843) (Fission yeast) protein is Protein yippee-like PJ691.02.